A 235-amino-acid polypeptide reads, in one-letter code: 2-C-methyl-D-erythritol 4-phosphate cytidylyltransferase (235 aa).

The protein belongs to the IspD/TarI cytidylyltransferase family. IspD subfamily.

The catalysed reaction is 2-C-methyl-D-erythritol 4-phosphate + CTP + H(+) = 4-CDP-2-C-methyl-D-erythritol + diphosphate. It participates in isoprenoid biosynthesis; isopentenyl diphosphate biosynthesis via DXP pathway; isopentenyl diphosphate from 1-deoxy-D-xylulose 5-phosphate: step 2/6. Catalyzes the formation of 4-diphosphocytidyl-2-C-methyl-D-erythritol from CTP and 2-C-methyl-D-erythritol 4-phosphate (MEP). The chain is 2-C-methyl-D-erythritol 4-phosphate cytidylyltransferase from Pseudomonas fluorescens (strain SBW25).